The sequence spans 438 residues: Argininosuccinate lyase (438 aa).

This sequence belongs to the lyase 1 family. Argininosuccinate lyase subfamily.

It localises to the cytoplasm. The enzyme catalyses 2-(N(omega)-L-arginino)succinate = fumarate + L-arginine. It functions in the pathway amino-acid biosynthesis; L-arginine biosynthesis; L-arginine from L-ornithine and carbamoyl phosphate: step 3/3. The sequence is that of Argininosuccinate lyase from Clostridium tetani (strain Massachusetts / E88).